A 129-amino-acid polypeptide reads, in one-letter code: Protein Turandot B2 (129 aa).

An N-terminal signal peptide occupies residues 1 to 21 (MNSATSLMCFALLLISPLCMG).

It belongs to the Turandot family.

It localises to the secreted. Its function is as follows. A humoral factor that may play a role in stress tolerance. The protein is Protein Turandot B2 (TotB2) of Drosophila erecta (Fruit fly).